The sequence spans 88 residues: Large ribosomal subunit protein bL31B (88 aa).

Belongs to the bacterial ribosomal protein bL31 family. Type B subfamily. As to quaternary structure, part of the 50S ribosomal subunit.

The chain is Large ribosomal subunit protein bL31B from Burkholderia orbicola (strain MC0-3).